The following is a 288-amino-acid chain: Protease HtpX homolog (288 aa).

The next 2 helical transmembrane spans lie at 1–21 (MHTI…LLAG) and 23–43 (IIGG…MNFF). A Zn(2+)-binding site is contributed by His130. The active site involves Glu131. A Zn(2+)-binding site is contributed by His134. The next 2 membrane-spanning stretches (helical) occupy residues 140–160 (ILIS…AEMA) and 175–195 (IGGL…AMII). A Zn(2+)-binding site is contributed by Glu204.

The protein belongs to the peptidase M48B family. Zn(2+) serves as cofactor.

Its subcellular location is the cell inner membrane. This Persephonella marina (strain DSM 14350 / EX-H1) protein is Protease HtpX homolog.